The sequence spans 181 residues: Large ribosomal subunit protein uL5 (181 aa).

Belongs to the universal ribosomal protein uL5 family. Part of the 50S ribosomal subunit; part of the 5S rRNA/L5/L18/L25 subcomplex. Contacts the 5S rRNA and the P site tRNA. Forms a bridge to the 30S subunit in the 70S ribosome.

In terms of biological role, this is one of the proteins that bind and probably mediate the attachment of the 5S RNA into the large ribosomal subunit, where it forms part of the central protuberance. In the 70S ribosome it contacts protein S13 of the 30S subunit (bridge B1b), connecting the 2 subunits; this bridge is implicated in subunit movement. Contacts the P site tRNA; the 5S rRNA and some of its associated proteins might help stabilize positioning of ribosome-bound tRNAs. The chain is Large ribosomal subunit protein uL5 from Colwellia psychrerythraea (strain 34H / ATCC BAA-681) (Vibrio psychroerythus).